Consider the following 366-residue polypeptide: tRNA/tmRNA (uracil-C(5))-methyltransferase (366 aa).

S-adenosyl-L-methionine is bound by residues Q190, Y218, N223, E239, and D299. C324 acts as the Nucleophile in catalysis. The active-site Proton acceptor is E358.

Belongs to the class I-like SAM-binding methyltransferase superfamily. RNA M5U methyltransferase family. TrmA subfamily.

It carries out the reaction uridine(54) in tRNA + S-adenosyl-L-methionine = 5-methyluridine(54) in tRNA + S-adenosyl-L-homocysteine + H(+). The enzyme catalyses uridine(341) in tmRNA + S-adenosyl-L-methionine = 5-methyluridine(341) in tmRNA + S-adenosyl-L-homocysteine + H(+). Its function is as follows. Dual-specificity methyltransferase that catalyzes the formation of 5-methyluridine at position 54 (m5U54) in all tRNAs, and that of position 341 (m5U341) in tmRNA (transfer-mRNA). This Salmonella agona (strain SL483) protein is tRNA/tmRNA (uracil-C(5))-methyltransferase.